The chain runs to 459 residues: DNA damage-inducible protein F (459 aa).

12 helical membrane passes run proline 2 to leucine 22, leucine 29 to valine 49, leucine 63 to leucine 83, leucine 111 to leucine 131, tryptophan 154 to glutamine 174, valine 180 to glycine 200, glycine 207 to valine 227, leucine 265 to isoleucine 285, alanine 289 to valine 309, isoleucine 338 to leucine 358, isoleucine 373 to isoleucine 393, and leucine 416 to alanine 436.

Belongs to the multi antimicrobial extrusion (MATE) (TC 2.A.66.1) family.

The protein resides in the cell inner membrane. In Escherichia coli (strain K12), this protein is DNA damage-inducible protein F (dinF).